Consider the following 192-residue polypeptide: dITP/XTP pyrophosphatase (192 aa).

7–12 is a binding site for substrate; it reads SNNKNK. Residue Asp68 is the Proton acceptor of the active site. Asp68 contributes to the Mg(2+) binding site. Substrate-binding positions include Thr69, 148–151, Lys171, and 176–177; these read FGYD and HR.

The protein belongs to the HAM1 NTPase family. As to quaternary structure, homodimer. It depends on Mg(2+) as a cofactor.

The catalysed reaction is XTP + H2O = XMP + diphosphate + H(+). The enzyme catalyses dITP + H2O = dIMP + diphosphate + H(+). It carries out the reaction ITP + H2O = IMP + diphosphate + H(+). Functionally, pyrophosphatase that catalyzes the hydrolysis of nucleoside triphosphates to their monophosphate derivatives, with a high preference for the non-canonical purine nucleotides XTP (xanthosine triphosphate), dITP (deoxyinosine triphosphate) and ITP. Seems to function as a house-cleaning enzyme that removes non-canonical purine nucleotides from the nucleotide pool, thus preventing their incorporation into DNA/RNA and avoiding chromosomal lesions. The sequence is that of dITP/XTP pyrophosphatase from Flavobacterium johnsoniae (strain ATCC 17061 / DSM 2064 / JCM 8514 / BCRC 14874 / CCUG 350202 / NBRC 14942 / NCIMB 11054 / UW101) (Cytophaga johnsonae).